The primary structure comprises 2603 residues: MEKATVPAAAEGEGSPPAAAAVAAPPAAAAAEVGGGARPASSPRGMVRVCDLLLKKKPPQQQQQQQPPHHKAKRNRTCRPPSSSESSSDSDNSGGGGGGGGGGGGGTSSNNSEEEEDDDDEEEEVSEVESFILDQDDLENPMLETASKLLLSGTADGADLRTVDPETQARLEALLEAAGIGKLSTADGKAFADPEVLRRLTSSVSCALDEAAAALTRMRAESTANAGQSDNRSLAEACSEGDVNAVRKLLIEGRSVNEHTEEGESLLCLACSAGYYELAQVLLAMHANVEDRGIKGDITPLMAAANGGHVKIVKLLLAHKADVNAQSSTGNTALTYACAGGYVDVVKVLLESGASIEDHNENGHTPLMEAGSAGHVEVARLLLENGAGINTHSNEFKESALTLACYKGHLEMVRFLLEAGADQEHKTDEMHTALMEACMDGHVEVARLLLDSGAQVNMPADSFESPLTLAACGGHVELAALLIERGASLEEVNDEGYTPLMEAAREGHEEMVALLLGQGANINAQTEETQETALTLACCGGFLEVADFLIKAGADIELGCSTPLMEAAQEGHLELVKYLLAAGANVHATTATGDTALTYACENGHTDVADVLLQAGADLEHESEGGRTPLMKAARAGHVCTVQFLISKGANVNRTTANNDHTVLSLACAGGHLAVVELLLAHGADPTHRLKDGSTMLIEAAKGGHTSVVCYLLDYPNNLLAAPPPDVTQLTPPSHDLNRAPRVPVQALPMVVPPQEPDKPPANLAATLPVRSKAASKQKSNSHLPANSQDVQGYITNQSPESIVEEAQGKLTELEQRIKEAIEKNAQLQSLELAHADQLTKEKIEELNKTREEQIQKKQKILEELQKVERELQLKTQQQLKKQYLEVKAQRIQLQQQQQQSCQHLGLFTSVGVGEQLSEGDYARLQQVDPVLLKDEPQQTAAQMGFAPIQPLAMPQALPLATGPLPPGSIANLTELQGVIVGQPVLGQAQLAGLGQGILTETQQGLMVASPAQTLNDTLDDIMAAVSGRASAMSNTPTHSIAASVSQPQTPTPSPIISPSAMLPIYPAIDIDAQTESNHDTALTLACAGGHEELVQTLLERGASIEHRDKKGFTPLILAATAGHVGVVEILLDNGADIEAQSERTKDTPLSLACSGGRQEVVELLLARGANKEHRNVSDYTPLSLAASGGYVNIIKILLNAGAEINSRTGSKLGISPLMLAAMNGHTAAVKLLLDMGSDINAQIETNRNTALTLACFQGRTEVVSLLLDRKANVEHRAKTGLTPLMEAASGGYAEVGRVLLDKGADVNAPPVPSSRDTALTIAADKGHYKFCELLIGKGAHIDVRNKKGNTPLWLAANGGHLDVVQLLVQATADVDAADNRKITPLMAAFRKGHVKVVRYLVKEVNQFPSDSECMRYIATITDKEMLKKCHLCMESIVQAKDRQAAEANKNASILLEELDLEKLREESRRLALAAKREKRKEKRRKKKEEQRRKLEEIEAKNKENFELQAAQEKEKLKVEEEPEVLTEPPSATTTTTIGISATWTTLAGSHGKRNNTITTTSSKRKNRKNKITPENVQIIFDDPLPISYSQPEKVNGESKSSSTSESGDSDNMRISSCSDESSNSNSSRKSNNHASAVVTTTMASKKQPSVLVTFPKEERKSVSGKASIKLSETVNEGTSNSLSTCTKSGPSPLSSPNGKLTVASPKRGPKREEGWKEVVRRSKKVSVPSTVISRVIGRGGCNINAIRECTGAHIDIDKQKDKTGDRIITIRGGTESTRQATQLINALIKDPDKEIDELIPKNRLKSSTANSKIGSSAPTTTAANSSLMGIKMTTVALSSTSQTATALTVPAISSASTHKTIKNPVNNVRPGFPVSLPLAYPPPQFAHALLAAQTFQQIRPPRLPMTHFGGTFPPAQSTWGPFPVRPLSPARATNSPKPHMVPRHSNQNSSGSQVNSAGSLTSSPTTTASSSASAVPGTTSNGSPSSPSVRRQLFVTVVKTSNATTTTVTTTASNNSTAPTNATYPMPTAKEHYPVSSPSSPSPPAQPGGVSRNSPLDCGSASPNKGASASEQEASSPPVVEPANSRPPHSSSSSGSSSGHSTQQQPPGSVPQEPRPPLQQSQVPSPDVRMTVPPTATSSAPVAVPSTAPVTYPMPQTQMGCSQPPKMEAPAIRPPSHATAAPHKTPAPVQSSSASVLNVNHIKRPHSVPSSVQLPSTLSTQSACQNSVHPANKPVAPNFSAPLPFGPFSTLFENNPTNAHAFWGGPVVSSQSTPESMLSGKSSYLPNSDPLHQSDTSKAPGFRPPLQRPAPSPSGIVNMDTPYGSVTPSSTHLGNFASSLSGGQMYGPGAPLGGAPLGGAPTAANFNRQHFSPLSLLTPCSSASNESPAQSVSSGVRAPSPAPSSVPLGSEKPSSVSQDRKVPVPIGTERSARIRQTGTSAPSVIGSNLSTSVGHSGIWSFEGIGGNQDKVDWCNPGMGNPMIHRPMSDPGVFSQHQAMERDSTGIVTPSGTFHQHVPAGYMDFPKVGSMPFSVYGNAMLPPVAPIADGAGGPIFNGPHSAEPSWNSLIKMVSSSTENNGPQTVWTGPWAPHMNSVHMNQLG.

Met-1 bears the N-acetylmethionine mark. Over residues 1–32 the composition is skewed to low complexity; the sequence is MEKATVPAAAEGEGSPPAAAAVAAPPAAAAAE. Residues 1–127 are disordered; the sequence is MEKATVPAAA…DDDEEEEVSE (127 aa). Phosphoserine occurs at positions 15 and 42. Residues 68–77 are compositionally biased toward basic residues; that stretch reads PHHKAKRNRT. Residues 82–92 are compositionally biased toward low complexity; it reads SSSESSSDSDN. A compositionally biased stretch (gly residues) spans 93–107; sequence SGGGGGGGGGGGGGT. The span at 112–127 shows a compositional bias: acidic residues; it reads SEEEEDDDDEEEEVSE. The residue at position 152 (Ser-152) is a Phosphoserine. ANK repeat units follow at residues 229 to 258, 262 to 291, 296 to 325, 329 to 358, 362 to 391, 396 to 425, 429 to 458, 462 to 491, 495 to 524, 529 to 558, 559 to 588, 592 to 621, 625 to 654, 659 to 688, and 692 to 721; these read SDNR…SVNE, EGES…NVED, GDIT…DVNA, TGNT…SIED, NGHT…GINT, FKES…DQEH, EMHT…QVNM, SFES…SLEE, EGYT…NINA, TQET…DIEL, GCST…NVHA, TGDT…DLEH, GGRT…NVNR, NDHT…DPTH, and DGST…NLLA. Lys-314 is covalently cross-linked (Glycyl lysine isopeptide (Lys-Gly) (interchain with G-Cter in SUMO2)). The disordered stretch occupies residues 770–792; that stretch reads VRSKAASKQKSNSHLPANSQDVQ. Polar residues predominate over residues 775–792; sequence ASKQKSNSHLPANSQDVQ. Position 799 is a phosphoserine (Ser-799). ANK repeat units follow at residues 1078–1107, 1111–1140, 1145–1174, 1178–1207, 1213–1242, 1247–1276, 1280–1309, 1315–1344, 1348–1377, and 1381–1410; these read NHDT…SIEH, KGFT…DIEA, TKDT…NKEH, SDYT…EINS, LGIS…DINA, NRNT…NVEH, TGLT…DVNA, SRDT…HIDV, KGNT…DVDA, and RKIT…QFPS. Residues 1438-1522 adopt a coiled-coil conformation; the sequence is VQAKDRQAAE…EKEKLKVEEE (85 aa). At Ser-1453 the chain carries Phosphoserine. 2 disordered regions span residues 1475–1496 and 1513–1713; these read AKRE…RKLE and EKEK…PKRE. The segment covering 1477–1487 has biased composition (basic residues); the sequence is REKRKEKRRKK. Low complexity-rich tracts occupy residues 1526–1546, 1598–1607, and 1616–1636; these read LTEP…TWTT, ESKSSSTSES, and SSCS…NHAS. Ser-1631 carries the post-translational modification Phosphoserine. Composition is skewed to polar residues over residues 1638 to 1648 and 1671 to 1699; these read VVTTTMASKKQ and LSET…SPNG. 3 positions are modified to phosphoserine: Ser-1692, Ser-1696, and Ser-1705. The KH domain occupies 1721–1785; the sequence is RRSKKVSVPS…ESTRQATQLI (65 aa). Arg-1870 carries the asymmetric dimethylarginine modification. 3 disordered regions span residues 1902-1991, 2007-2195, and 2269-2327; these read PRLP…PSVR, TTVT…SSSA, and VSSQ…YGSV. Low complexity-rich tracts occupy residues 1946–1989 and 2007–2024; these read SNQN…SSPS and TTVT…TNAT. A phosphoserine mark is found at Ser-2038, Ser-2040, Ser-2041, Ser-2043, Ser-2055, and Ser-2063. 3 stretches are compositionally biased toward low complexity: residues 2068-2077, 2087-2108, and 2175-2189; these read ASASEQEASS, RPPH…QQPP, and PPSH…TPAP. The segment covering 2269–2298 has biased composition (polar residues); the sequence is VSSQSTPESMLSGKSSYLPNSDPLHQSDTS. Over residues 2303–2313 the composition is skewed to pro residues; the sequence is FRPPLQRPAPS. Ser-2373 bears the Phosphoserine mark. Residues 2378 to 2447 form a disordered region; sequence LTPCSSASNE…TGTSAPSVIG (70 aa). Positions 2379-2391 are enriched in polar residues; that stretch reads TPCSSASNESPAQ. Residues 2392-2411 are compositionally biased toward low complexity; sequence SVSSGVRAPSPAPSSVPLGS. Ser-2401 carries the post-translational modification Phosphoserine. Over residues 2435–2447 the composition is skewed to polar residues; sequence IRQTGTSAPSVIG.

As to quaternary structure, interacts (via N-terminus) with NOD2. Interacts with CDK2, MCM3, MCM5, MCM7, CDC6 and PCNA. Interacts with MAVS and IFIH1. Interacts (via the second ankyrin repeat cluster) with RIGI. In terms of processing, phosphorylated by CDK2. In terms of tissue distribution, highly expressed in fetal liver. Detected in adult liver cells, ovarian oocytes, seminiferous tubules of the testes and pelvic region of the kidney. It was not detected in heart, gut, lung, spleen and skeletal muscle. Earliest specific in situ marker of hepatic differentiation during embryogenesis, useful for characterization of inductive events involved in hepatic specification.

It localises to the cytoplasm. The protein localises to the nucleus. Could play pivotal roles in cell cycle and DNA regulation. Involved in innate immune defense against viruse by positively regulating the viral dsRNA receptors RIGI and IFIH1 signaling pathways. Involves in NOD2- and NOD1-mediated responses to bacteria suggesting a role in innate antibacterial immune pathways too. Could play a central role for the formation and/or maintenance of the blood vessels of the circulation system. This Mus musculus (Mouse) protein is Ankyrin repeat domain-containing protein 17 (Ankrd17).